The sequence spans 291 residues: uncharacterized protein (291 aa).

The disordered stretch occupies residues 1-82; that stretch reads MEAEKETEQE…SYSSSPFETH (82 aa). Composition is skewed to low complexity over residues 28-43 and 59-78; these read HSHSMSSPIHSSISAS and STSSSSSSSSSPLTSYSSSP.

This is an uncharacterized protein from Arabidopsis thaliana (Mouse-ear cress).